The chain runs to 210 residues: Fibroblast growth factor 8 (210 aa).

Positions 1 to 27 (MRLIPSRLSYLFLHLFAFCYYAQVTIQ) are cleaved as a signal peptide.

This sequence belongs to the heparin-binding growth factors family. In terms of assembly, monomer. Homodimer.

It localises to the secreted. Functionally, plays an important role in the regulation of embryonic development, cell proliferation, cell differentiation and cell migration. Required for Kupffer's vesicle ciliogenesis. The protein is Fibroblast growth factor 8 of Danio rerio (Zebrafish).